The sequence spans 139 residues: D-ribose pyranase (139 aa).

Histidine 20 functions as the Proton donor in the catalytic mechanism. Substrate contacts are provided by residues aspartate 28, histidine 106, and 128-130; that span reads YAN.

Belongs to the RbsD / FucU family. RbsD subfamily. As to quaternary structure, homodecamer.

The protein localises to the cytoplasm. The enzyme catalyses beta-D-ribopyranose = beta-D-ribofuranose. It functions in the pathway carbohydrate metabolism; D-ribose degradation; D-ribose 5-phosphate from beta-D-ribopyranose: step 1/2. In terms of biological role, catalyzes the interconversion of beta-pyran and beta-furan forms of D-ribose. The chain is D-ribose pyranase from Shewanella halifaxensis (strain HAW-EB4).